Reading from the N-terminus, the 346-residue chain is Methionine import ATP-binding protein MetN (346 aa).

Positions 2-243 constitute an ABC transporter domain; sequence VRFEGISKTY…PKHPITQSFL (242 aa). 40–47 contacts ATP; the sequence is GRSGAGKS.

It belongs to the ABC transporter superfamily. Methionine importer (TC 3.A.1.24) family. The complex is composed of two ATP-binding proteins (MetN), two transmembrane proteins (MetI) and a solute-binding protein (MetQ).

It is found in the cell inner membrane. It catalyses the reaction L-methionine(out) + ATP + H2O = L-methionine(in) + ADP + phosphate + H(+). It carries out the reaction D-methionine(out) + ATP + H2O = D-methionine(in) + ADP + phosphate + H(+). Its function is as follows. Part of the ABC transporter complex MetNIQ involved in methionine import. Responsible for energy coupling to the transport system. The polypeptide is Methionine import ATP-binding protein MetN (Bradyrhizobium diazoefficiens (strain JCM 10833 / BCRC 13528 / IAM 13628 / NBRC 14792 / USDA 110)).